We begin with the raw amino-acid sequence, 151 residues long: MQKTTRTMPAHKHVALVAHDNCKPELLRWVKENKEKLQSHFLYATGTTGHMLSKETGLAIKSMISGPMGGDQQLGALISEGNIDVLVFFWDPLNAVPHDPDVKALLRIASVWNIPVATNRATAKFLFNSPLIDQEVDIEVPDYDAYLAERT.

The MGS-like domain occupies 6–151; sequence RTMPAHKHVA…DYDAYLAERT (146 aa). Residues His19, Lys23, 45–48, and 65–66 each bind substrate; these read TGTT and SG. The Proton donor/acceptor role is filled by Asp71. A substrate-binding site is contributed by His98.

This sequence belongs to the methylglyoxal synthase family.

It catalyses the reaction dihydroxyacetone phosphate = methylglyoxal + phosphate. In terms of biological role, catalyzes the formation of methylglyoxal from dihydroxyacetone phosphate. The protein is Methylglyoxal synthase of Vibrio campbellii (strain ATCC BAA-1116).